Reading from the N-terminus, the 201-residue chain is MTVFMSDIRMAAQGGPGFGNDVFDRLLSERIIFLGSQVDDEIANKLCAQILLLSAEDPTRDISLYINSPGGSVTAGMAIYDTMKYSPCDIATYGMGLAASMGQFLLSGGTKGKRFALPHARIMMHQPSAGVGGTAADIAIQAEQFAATKREMAQLIAEHTGQTFEQISKDSDRDRWFTAQEAKDYGLVDHVITLAEGPISN.

S100 serves as the catalytic Nucleophile. H125 is an active-site residue.

Belongs to the peptidase S14 family. As to quaternary structure, fourteen ClpP subunits assemble into 2 heptameric rings which stack back to back to give a disk-like structure with a central cavity, resembling the structure of eukaryotic proteasomes.

It is found in the cytoplasm. It carries out the reaction Hydrolysis of proteins to small peptides in the presence of ATP and magnesium. alpha-casein is the usual test substrate. In the absence of ATP, only oligopeptides shorter than five residues are hydrolyzed (such as succinyl-Leu-Tyr-|-NHMec, and Leu-Tyr-Leu-|-Tyr-Trp, in which cleavage of the -Tyr-|-Leu- and -Tyr-|-Trp bonds also occurs).. Functionally, cleaves peptides in various proteins in a process that requires ATP hydrolysis. Has a chymotrypsin-like activity. Plays a major role in the degradation of misfolded proteins. This Corynebacterium glutamicum (strain ATCC 13032 / DSM 20300 / JCM 1318 / BCRC 11384 / CCUG 27702 / LMG 3730 / NBRC 12168 / NCIMB 10025 / NRRL B-2784 / 534) protein is ATP-dependent Clp protease proteolytic subunit 2.